A 178-amino-acid chain; its full sequence is Large ribosomal subunit protein uL6 (178 aa).

It belongs to the universal ribosomal protein uL6 family. Part of the 50S ribosomal subunit.

Functionally, this protein binds to the 23S rRNA, and is important in its secondary structure. It is located near the subunit interface in the base of the L7/L12 stalk, and near the tRNA binding site of the peptidyltransferase center. This Francisella tularensis subsp. holarctica (strain FTNF002-00 / FTA) protein is Large ribosomal subunit protein uL6.